Consider the following 302-residue polypeptide: 4-hydroxy-tetrahydrodipicolinate synthase (302 aa).

Thr55 contacts pyruvate. Tyr144 acts as the Proton donor/acceptor in catalysis. Lys172 functions as the Schiff-base intermediate with substrate in the catalytic mechanism. Val214 is a binding site for pyruvate.

It belongs to the DapA family. In terms of assembly, homotetramer; dimer of dimers.

The protein resides in the cytoplasm. It catalyses the reaction L-aspartate 4-semialdehyde + pyruvate = (2S,4S)-4-hydroxy-2,3,4,5-tetrahydrodipicolinate + H2O + H(+). It functions in the pathway amino-acid biosynthesis; L-lysine biosynthesis via DAP pathway; (S)-tetrahydrodipicolinate from L-aspartate: step 3/4. In terms of biological role, catalyzes the condensation of (S)-aspartate-beta-semialdehyde [(S)-ASA] and pyruvate to 4-hydroxy-tetrahydrodipicolinate (HTPA). The sequence is that of 4-hydroxy-tetrahydrodipicolinate synthase from Synechococcus sp. (strain CC9311).